Consider the following 274-residue polypeptide: MGIRIYKPTSAGRRNMSVSTFEEITKKRPEPGLIEPLRKKAGRNNQGRITVRHRGGGHKRFYRIIDFKRDKFGIPAKVQAIEYDPNRSARIALLAYVDGEKRYIIAPLGLKVGDTVMSGPNAEIRVGNALPLGAIPLGTQIHNIELEIGRGGVLVRAAGTAAQLMAKEGDYATIRMPSGEVRMIHLRCMATIGQVGNVDHQNIRLGKAGRSRWLGRRPRVRGAAMNPRDHPHGGGEGRAPRGMSTPKTKWGKPARGVKTRHNPRFDRFIIRRRK.

The disordered stretch occupies residues 220-259; it reads VRGAAMNPRDHPHGGGEGRAPRGMSTPKTKWGKPARGVKT. Positions 227-239 are enriched in basic and acidic residues; sequence PRDHPHGGGEGRA. The span at 249-259 shows a compositional bias: basic residues; the sequence is KWGKPARGVKT.

Belongs to the universal ribosomal protein uL2 family. In terms of assembly, part of the 50S ribosomal subunit. Forms a bridge to the 30S subunit in the 70S ribosome.

In terms of biological role, one of the primary rRNA binding proteins. Required for association of the 30S and 50S subunits to form the 70S ribosome, for tRNA binding and peptide bond formation. It has been suggested to have peptidyltransferase activity; this is somewhat controversial. Makes several contacts with the 16S rRNA in the 70S ribosome. The sequence is that of Large ribosomal subunit protein uL2 from Chloroflexus aggregans (strain MD-66 / DSM 9485).